The following is a 184-amino-acid chain: MTWRSEHIWIELITGSRKISNFCWAFILFLGSLGFLLVGTSSYLGRNLISFFPTQQIVFFPQGIVMSFYGIAGLFISSYLWCTISWNVGSGYDRFDRKEGIVCIFRWGFPGKNRRIFLRFLIKDIQSVRIEVKEGISARRVLYMDIRGQGSIPLTRTDENLTPREIEQKAAELAYFLRVPIEVF.

Helical transmembrane passes span 19 to 39 and 57 to 77; these read ISNF…LLVG and IVFF…LFIS.

It belongs to the Ycf4 family.

It localises to the plastid. The protein localises to the chloroplast thylakoid membrane. Seems to be required for the assembly of the photosystem I complex. This Atropa belladonna (Belladonna) protein is Photosystem I assembly protein Ycf4.